Reading from the N-terminus, the 512-residue chain is Probable DNA ligase (512 aa).

E208 is a binding site for ATP. The N6-AMP-lysine intermediate role is filled by K210. Residues R215, R230, E259, F299, R374, and K380 each contribute to the ATP site.

Belongs to the ATP-dependent DNA ligase family. Mg(2+) serves as cofactor.

The enzyme catalyses ATP + (deoxyribonucleotide)n-3'-hydroxyl + 5'-phospho-(deoxyribonucleotide)m = (deoxyribonucleotide)n+m + AMP + diphosphate.. Its function is as follows. DNA ligase that seals nicks in double-stranded DNA during DNA replication, DNA recombination and DNA repair. The chain is Probable DNA ligase from Streptomyces avermitilis (strain ATCC 31267 / DSM 46492 / JCM 5070 / NBRC 14893 / NCIMB 12804 / NRRL 8165 / MA-4680).